Consider the following 253-residue polypeptide: Large ribosomal subunit protein uL4 (253 aa).

The interval 78 to 107 is disordered; the sequence is SRAARVPHAKGGRRAHPPKPEADRSEKVNT. Residues 82 to 94 show a composition bias toward basic residues; it reads RVPHAKGGRRAHP. Residues 95-107 are compositionally biased toward basic and acidic residues; it reads PKPEADRSEKVNT.

This sequence belongs to the universal ribosomal protein uL4 family. In terms of assembly, part of the 50S ribosomal subunit.

One of the primary rRNA binding proteins, this protein initially binds near the 5'-end of the 23S rRNA. It is important during the early stages of 50S assembly. It makes multiple contacts with different domains of the 23S rRNA in the assembled 50S subunit and ribosome. Its function is as follows. Forms part of the polypeptide exit tunnel. In Methanosarcina acetivorans (strain ATCC 35395 / DSM 2834 / JCM 12185 / C2A), this protein is Large ribosomal subunit protein uL4.